The chain runs to 132 residues: Holo-[acyl-carrier-protein] synthase (132 aa).

Asp-8 and Glu-62 together coordinate Mg(2+).

Belongs to the P-Pant transferase superfamily. AcpS family. It depends on Mg(2+) as a cofactor.

The protein localises to the cytoplasm. It carries out the reaction apo-[ACP] + CoA = holo-[ACP] + adenosine 3',5'-bisphosphate + H(+). Its function is as follows. Transfers the 4'-phosphopantetheine moiety from coenzyme A to a Ser of acyl-carrier-protein. The polypeptide is Holo-[acyl-carrier-protein] synthase (Leptothrix cholodnii (strain ATCC 51168 / LMG 8142 / SP-6) (Leptothrix discophora (strain SP-6))).